Consider the following 160-residue polypeptide: SsrA-binding protein (160 aa).

The protein belongs to the SmpB family.

The protein resides in the cytoplasm. Its function is as follows. Required for rescue of stalled ribosomes mediated by trans-translation. Binds to transfer-messenger RNA (tmRNA), required for stable association of tmRNA with ribosomes. tmRNA and SmpB together mimic tRNA shape, replacing the anticodon stem-loop with SmpB. tmRNA is encoded by the ssrA gene; the 2 termini fold to resemble tRNA(Ala) and it encodes a 'tag peptide', a short internal open reading frame. During trans-translation Ala-aminoacylated tmRNA acts like a tRNA, entering the A-site of stalled ribosomes, displacing the stalled mRNA. The ribosome then switches to translate the ORF on the tmRNA; the nascent peptide is terminated with the 'tag peptide' encoded by the tmRNA and targeted for degradation. The ribosome is freed to recommence translation, which seems to be the essential function of trans-translation. This is SsrA-binding protein from Pectobacterium atrosepticum (strain SCRI 1043 / ATCC BAA-672) (Erwinia carotovora subsp. atroseptica).